The following is a 572-amino-acid chain: Beta-fructofuranosidase, insoluble isoenzyme CWINV5 (572 aa).

The N-terminal stretch at 1 to 23 is a signal peptide; it reads MANIVWCNIAMFLLVSLFLTDDA. Residues 54–57 and Q73 each bind substrate; that span reads WMND. D57 is an active-site residue. N-linked (GlcNAc...) asparagine glycosylation occurs at N84. A substrate-binding site is contributed by 118–119; the sequence is WS. N152 and N179 each carry an N-linked (GlcNAc...) asparagine glycan. Residues 184–185 and E239 each bind substrate; that span reads RD. N-linked (GlcNAc...) asparagine glycans are attached at residues N333 and N438. The cysteines at positions 434 and 481 are disulfide-linked.

Belongs to the glycosyl hydrolase 32 family. As to expression, expressed in flowers, and, to a lower extent, in leaves.

Its subcellular location is the secreted. It localises to the extracellular space. It is found in the apoplast. The protein localises to the cell wall. It catalyses the reaction Hydrolysis of terminal non-reducing beta-D-fructofuranoside residues in beta-D-fructofuranosides.. The polypeptide is Beta-fructofuranosidase, insoluble isoenzyme CWINV5 (CWINV5) (Arabidopsis thaliana (Mouse-ear cress)).